The following is a 297-amino-acid chain: UBX domain-containing protein 1 (297 aa).

Ala2 carries the post-translational modification N-acetylalanine. Residues 2–42 form the UBA domain; that stretch reads AELTALESLIEMGFPRGRAEKALALTGNQGIEAAMDWLMEH. Residues 38–214 are disordered; that stretch reads WLMEHEDDPD…PPTKREYDQC (177 aa). Residues 42-52 show a composition bias toward acidic residues; that stretch reads HEDDPDVDEPL. An interaction with BRCA1 region spans residues 43–297; that stretch reads EDDPDVDEPL…VLIVAKKCPS (255 aa). 2 stretches are compositionally biased toward basic and acidic residues: residues 86–122 and 137–177; these read LTEEERQEQTKRMLELVAQKQREREEREEREALEREK and KLQE…ERAK. Phosphoserine is present on Ser199. Phosphoserine; by MAPK12 is present on Ser200. A phosphothreonine mark is found at Thr207 and Thr229. In terms of domain architecture, UBX spans 209–291; the sequence is REYDQCRIQV…GLVPSAVLIV (83 aa). At Ser270 the chain carries Phosphoserine.

Interacts with MAVS; this interaction prevents MAVS oligomerization and thus disrupts the RLR signaling pathway. Interacts with CUL1; this interaction inhibits CUL1-mediated degradation of NF-kappa-B inhibitors. Interacts with BIRC2/c-IAP1; this interaction prevents TNFalpha-stimulated RIP1 ubiquitination and subsequent NF-kappa-B activation. Component of a complex required to couple retrotranslocation, ubiquitination and deglycosylation composed of NGLY1, SAKS1, AMFR, VCP and RAD23B. Interacts with HOMER2. Interacts directly with VCP. Interacts with BRCA1 and BARD1; interaction takes place when BRCA1 is not autoubiquitinated but is strongly enhanced in the presence of autoubiquitinated BRCA1.

It localises to the cytoplasm. In terms of biological role, ubiquitin-binding protein that plays a role in the modulation of innate immune response. Blocks both the RIG-I-like receptors (RLR) and NF-kappa-B pathways. Following viral infection, UBXN1 is induced and recruited to the RLR component MAVS. In turn, interferes with MAVS oligomerization, and disrupts the MAVS/TRAF3/TRAF6 signalosome. This function probably serves as a brake to prevent excessive RLR signaling. Interferes with the TNFalpha-triggered NF-kappa-B pathway by interacting with cellular inhibitors of apoptosis proteins (cIAPs) and thereby inhibiting their recruitment to TNFR1. Also prevents the activation of NF-kappa-B by associating with CUL1 and thus inhibiting NF-kappa-B inhibitor alpha/NFKBIA degradation that remains bound to NF-kappa-B. Interacts with the BRCA1-BARD1 heterodimer and regulates its activity. Specifically binds 'Lys-6'-linked polyubiquitin chains. Interaction with autoubiquitinated BRCA1 leads to the inhibition of the E3 ubiquitin-protein ligase activity of the BRCA1-BARD1 heterodimer. Component of a complex required to couple deglycosylation and proteasome-mediated degradation of misfolded proteins in the endoplasmic reticulum that are retrotranslocated in the cytosol. The protein is UBX domain-containing protein 1 (Ubxn1) of Mus musculus (Mouse).